A 592-amino-acid polypeptide reads, in one-letter code: Aspartate--tRNA ligase (592 aa).

L-aspartate is bound at residue E171. Residues 195–198 (QLFK) form an aspartate region. R217 provides a ligand contact to L-aspartate. ATP is bound by residues 217–219 (RDE) and Q226. H448 contacts L-aspartate. E482 serves as a coordination point for ATP. R489 is an L-aspartate binding site. 534–537 (GLDR) lines the ATP pocket.

This sequence belongs to the class-II aminoacyl-tRNA synthetase family. Type 1 subfamily. In terms of assembly, homodimer.

It is found in the cytoplasm. The enzyme catalyses tRNA(Asp) + L-aspartate + ATP = L-aspartyl-tRNA(Asp) + AMP + diphosphate. Its function is as follows. Catalyzes the attachment of L-aspartate to tRNA(Asp) in a two-step reaction: L-aspartate is first activated by ATP to form Asp-AMP and then transferred to the acceptor end of tRNA(Asp). This Vibrio atlanticus (strain LGP32) (Vibrio splendidus (strain Mel32)) protein is Aspartate--tRNA ligase.